A 219-amino-acid polypeptide reads, in one-letter code: uncharacterized protein (219 aa).

A helical transmembrane segment spans residues 28–50 (IVSSLIAGGYALFVSAFTSYVYT). Residues 155–218 (EILRESLSEI…EEIEKELEFF (64 aa)) adopt a coiled-coil conformation.

The protein localises to the membrane. This is an uncharacterized protein from Aquifex aeolicus (strain VF5).